The primary structure comprises 298 residues: Diphthine methyl ester synthase (298 aa).

S-adenosyl-L-methionine is bound by residues L9, D85, G88, 113 to 114, L164, L222, and H247; that span reads SV.

The protein belongs to the diphthine synthase family.

Its subcellular location is the cytoplasm. It carries out the reaction 2-[(3S)-amino-3-carboxypropyl]-L-histidyl-[translation elongation factor 2] + 4 S-adenosyl-L-methionine = diphthine methyl ester-[translation elongation factor 2] + 4 S-adenosyl-L-homocysteine + 3 H(+). Its pathway is protein modification; peptidyl-diphthamide biosynthesis. Its function is as follows. S-adenosyl-L-methionine-dependent methyltransferase that catalyzes four methylations of the modified target histidine residue in translation elongation factor 2 (EF-2), to form an intermediate called diphthine methyl ester. The four successive methylation reactions represent the second step of diphthamide biosynthesis. This Kluyveromyces lactis (strain ATCC 8585 / CBS 2359 / DSM 70799 / NBRC 1267 / NRRL Y-1140 / WM37) (Yeast) protein is Diphthine methyl ester synthase (DPH5).